The following is a 144-amino-acid chain: Large ribosomal subunit protein uL16 (144 aa).

This sequence belongs to the universal ribosomal protein uL16 family. Part of the 50S ribosomal subunit.

In terms of biological role, binds 23S rRNA and is also seen to make contacts with the A and possibly P site tRNAs. This chain is Large ribosomal subunit protein uL16, found in Ligilactobacillus salivarius (strain UCC118) (Lactobacillus salivarius).